The sequence spans 303 residues: Nucleotide-binding protein USA300HOU_0794 (303 aa).

18–25 (GLSGAGKS) serves as a coordination point for ATP. 69–72 (DLRG) provides a ligand contact to GTP.

The protein belongs to the RapZ-like family.

Displays ATPase and GTPase activities. The chain is Nucleotide-binding protein USA300HOU_0794 from Staphylococcus aureus (strain USA300 / TCH1516).